The chain runs to 277 residues: General transcription factor IIF subunit 2 (277 aa).

The protein belongs to the TFIIF beta subunit family. In terms of assembly, heterodimer of an alpha and a beta subunit.

It is found in the nucleus. Functionally, TFIIF is a general transcription initiation factor that binds to RNA polymerase II and helps to recruit it to the initiation complex in collaboration with TFIIB. In Drosophila melanogaster (Fruit fly), this protein is General transcription factor IIF subunit 2 (TfIIFbeta).